We begin with the raw amino-acid sequence, 513 residues long: Cobyric acid synthase (513 aa).

One can recognise a GATase cobBQ-type domain in the interval 252-457; sequence KIDIAVIRLP…LHGIFDEEGI (206 aa). The Nucleophile role is filled by Cys-333. The active site involves His-449.

Belongs to the CobB/CobQ family. CobQ subfamily.

Its pathway is cofactor biosynthesis; adenosylcobalamin biosynthesis. Catalyzes amidations at positions B, D, E, and G on adenosylcobyrinic A,C-diamide. NH(2) groups are provided by glutamine, and one molecule of ATP is hydrogenolyzed for each amidation. The sequence is that of Cobyric acid synthase from Lachnoclostridium phytofermentans (strain ATCC 700394 / DSM 18823 / ISDg) (Clostridium phytofermentans).